Consider the following 216-residue polypeptide: MAAGSWTAGLLAFALLCLPWPQEASAFPAMPLSSLFANAVLRAQHLHQLAADTYKEFERAYIPEGQRYSIQNAQAAFCFSETIPAPTGKDEAQQRSDMELLRFSLLLIQSWLGPVQFLSRAFTNTLVFGTSDRVYEKLKDLEEGIQALMRELEDGSPRVGQLLKQTYDKFDTNLRGDDALLKNYGLLSCFKKDLHKAETYLRVMKCRRFVESSCVF.

A signal peptide spans 1–26 (MAAGSWTAGLLAFALLCLPWPQEASA). His-45 contributes to the Zn(2+) binding site. Residues Cys-78 and Cys-189 are joined by a disulfide bond. A Phosphoserine modification is found at Ser-131. Residue Glu-198 coordinates Zn(2+). Cys-206 and Cys-214 form a disulfide bridge.

It belongs to the somatotropin/prolactin family.

It is found in the secreted. Functionally, plays an important role in growth control. Its major role in stimulating body growth is to stimulate the liver and other tissues to secrete IGF1. It stimulates both the differentiation and proliferation of myoblasts. It also stimulates amino acid uptake and protein synthesis in muscle and other tissues. The protein is Somatotropin (GH1) of Oryctolagus cuniculus (Rabbit).